We begin with the raw amino-acid sequence, 62 residues long: Large ribosomal subunit protein bL28 (62 aa).

Belongs to the bacterial ribosomal protein bL28 family.

In Frankia casuarinae (strain DSM 45818 / CECT 9043 / HFP020203 / CcI3), this protein is Large ribosomal subunit protein bL28.